The chain runs to 94 residues: MNMQKMLQQAKALQSKMEKKIKEFEQEEFEFVYQKSITIQIKGNYEIIKMDINKELIDPEDKTMLEEMISEAINEAISAITEEKEKITKGAMPF.

Belongs to the YbaB/EbfC family. Homodimer.

The protein localises to the cytoplasm. It is found in the nucleoid. Its function is as follows. Binds to DNA and alters its conformation. May be involved in regulation of gene expression, nucleoid organization and DNA protection. This is Nucleoid-associated protein MYPE8070 from Malacoplasma penetrans (strain HF-2) (Mycoplasma penetrans).